A 593-amino-acid polypeptide reads, in one-letter code: Aspartate--tRNA(Asp/Asn) ligase (593 aa).

Residue E172 participates in L-aspartate binding. Residues 196–199 are aspartate; it reads QLFK. Residue R218 participates in L-aspartate binding. ATP is bound by residues 218-220 and Q227; that span reads RDE. An L-aspartate-binding site is contributed by H450. ATP is bound at residue E484. Residue R491 coordinates L-aspartate. 536–539 is a binding site for ATP; the sequence is GLDR.

This sequence belongs to the class-II aminoacyl-tRNA synthetase family. Type 1 subfamily. As to quaternary structure, homodimer.

It is found in the cytoplasm. It carries out the reaction tRNA(Asx) + L-aspartate + ATP = L-aspartyl-tRNA(Asx) + AMP + diphosphate. Functionally, aspartyl-tRNA synthetase with relaxed tRNA specificity since it is able to aspartylate not only its cognate tRNA(Asp) but also tRNA(Asn). Reaction proceeds in two steps: L-aspartate is first activated by ATP to form Asp-AMP and then transferred to the acceptor end of tRNA(Asp/Asn). The protein is Aspartate--tRNA(Asp/Asn) ligase of Nitrosomonas eutropha (strain DSM 101675 / C91 / Nm57).